An 85-amino-acid chain; its full sequence is Small ribosomal subunit protein bS20 (85 aa).

The interval 1–22 (MPQIKSAIKRVKTQNATNKRNA) is disordered. The segment covering 13 to 22 (TQNATNKRNA) has biased composition (polar residues).

Belongs to the bacterial ribosomal protein bS20 family.

Binds directly to 16S ribosomal RNA. The protein is Small ribosomal subunit protein bS20 of Lactobacillus acidophilus (strain ATCC 700396 / NCK56 / N2 / NCFM).